A 549-amino-acid polypeptide reads, in one-letter code: MTNVVVSGEQLQEAFREVAAIVDSTVAITAGPRGKTVGINKPYGAPEITKDGYKVMKGIKPEKPLNAAIASIFAQSCSQCNDKVGDGTTTCSILTSNMIMEASKSIAAGNDRVGIKNGIQKAKDVILKEIASMSRTISLEKIDEVAQVAIISANGDKDIGNSIADSVKKVGKEGVITVEESKGSKELEVELTTGMQFDRGYLSPYFITNNEKMIVELDNPYLLITEKKLNIIQPLLPILEAIVKSGKPLVIIAEDIEGEALSTLVINKLRGGLKVAAVKAPGFGDRRKEMLEDIATLTGAKYVIKDELGIKMEDLTLDDLGTAKNVKITKDNTTVVSENSDSDSVKARIEQIKSQIETSTSDYDKEKLRERLAKLSGGVAVLKVGGATEVEVKERRDRVEDALHATRAAIEEGIVPGGGVALLYASSVLDKLKGASDEEQIGINIIKKVLSAPIRRLVKNAGLESAVIIDYLIKQNDKELIYNVEAMNYANAFTAGVIDPAKVVRIAFETAVSVASVLITTESMIVDVPSKENASSPMGAGEMSGMGGF.

ATP is bound by residues Thr-29 to Pro-32, Lys-50, Asp-86 to Thr-90, Gly-418, and Asp-499.

Belongs to the chaperonin (HSP60) family. Forms a cylinder of 14 subunits composed of two heptameric rings stacked back-to-back. Interacts with the co-chaperonin GroES.

It localises to the cytoplasm. The catalysed reaction is ATP + H2O + a folded polypeptide = ADP + phosphate + an unfolded polypeptide.. Its function is as follows. Together with its co-chaperonin GroES, plays an essential role in assisting protein folding. The GroEL-GroES system forms a nano-cage that allows encapsulation of the non-native substrate proteins and provides a physical environment optimized to promote and accelerate protein folding. The protein is Chaperonin GroEL of Wolbachia pipientis wMel.